Reading from the N-terminus, the 158-residue chain is Pleckstrin homology domain-containing family J member 1 (158 aa).

Residues 15 to 108 (PTQRAAELGM…WIDAIIKASY (94 aa)) form the PH domain.

This Danio rerio (Zebrafish) protein is Pleckstrin homology domain-containing family J member 1 (plekhj1).